The following is a 272-amino-acid chain: Shikimate dehydrogenase (NADP(+)) (272 aa).

Residues 14–16 (SKS) and Thr61 contribute to the shikimate site. The active-site Proton acceptor is Lys65. Glu77 serves as a coordination point for NADP(+). Shikimate-binding residues include Asn86 and Asp102. Residues 126–130 (GAGGA), 150–155 (NRTFSK), and Met213 contribute to the NADP(+) site. Tyr215 lines the shikimate pocket. Gly237 serves as a coordination point for NADP(+).

Belongs to the shikimate dehydrogenase family. In terms of assembly, homodimer.

The catalysed reaction is shikimate + NADP(+) = 3-dehydroshikimate + NADPH + H(+). Its pathway is metabolic intermediate biosynthesis; chorismate biosynthesis; chorismate from D-erythrose 4-phosphate and phosphoenolpyruvate: step 4/7. Its function is as follows. Involved in the biosynthesis of the chorismate, which leads to the biosynthesis of aromatic amino acids. Catalyzes the reversible NADPH linked reduction of 3-dehydroshikimate (DHSA) to yield shikimate (SA). This is Shikimate dehydrogenase (NADP(+)) from Psychromonas ingrahamii (strain DSM 17664 / CCUG 51855 / 37).